Here is a 448-residue protein sequence, read N- to C-terminus: MEKEKKVKYFLRKSAFGLASVSAAFLVGSTVFAVDSPIEDTPIIRNGGELTNLLGNSETTLALRNEESATADLTAAAVADTVAAAAAENAGAAAWEAAAAADALAKAKADALKEFNKYGVSDYYKNLINNAKTVEGIKDLQAQVVESAKKARISEATDGLSDFLKSQTPAEDTVKSIELAEAKVLANRELDKYGVSDYHKNLINNAKTVEGVKELIDEILAALPKTDTYKLILNGKTLKGETTTEAVDAATAEKVFKQYANDNGVDGEWTYDDATKTFTVTEKPEVIDASELTPAVTTYKLVINGKTLKGETTTKAVDAETAEKAFKQYANDNGVDGVWTYDDATKTFTVTEMVTEVPGDAPTEPEKPEASIPLVPLTPATPIAKDDAKKDDTKKEDAKKPEAKKDDAKKAETLPTTGEGSNPFFTAAALAVMAGAGALAVASKRKED.

An N-terminal signal peptide occupies residues 1 to 33 (MEKEKKVKYFLRKSAFGLASVSAAFLVGSTVFA). 4 tandem repeats follow at residues 104–140 (LAKAKADALKEFNKYGVSDYYKNLINNAKTVEGIKDL), 179–215 (LAEAKVLANRELDKYGVSDYHKNLINNAKTVEGVKEL), 228–282 (TYKL…TVTE), and 298–352 (TYKL…TVTE). The interval 104-215 (LAKAKADALK…AKTVEGVKEL (112 aa)) is 2 X 37 AA repeats. The 2 X 55 AA repeats stretch occupies residues 228-352 (TYKLILNGKT…DATKTFTVTE (125 aa)). Positions 358 to 422 (PGDAPTEPEK…TLPTTGEGSN (65 aa)) are disordered. The segment covering 384-412 (AKDDAKKDDTKKEDAKKPEAKKDDAKKAE) has biased composition (basic and acidic residues). The tract at residues 386 to 410 (DDAKKDDTKKEDAKKPEAKKDDAKK) is 5 X 5 AA repeats of [DE]-D-A-K-K. An LPXTG sorting signal motif is present at residues 414–418 (LPTTG). The residue at position 417 (Thr-417) is a Pentaglycyl murein peptidoglycan amidated threonine. A propeptide spans 418–448 (GEGSNPFFTAAALAVMAGAGALAVASKRKED) (removed by sortase).

Its subcellular location is the secreted. The protein localises to the cell wall. Functionally, binds to the constant Fc region of IgG with high affinity. This chain is Immunoglobulin G-binding protein G (spg), found in Streptococcus sp. group G.